The following is a 179-amino-acid chain: Inner membrane-spanning protein YciB (179 aa).

A run of 5 helical transmembrane segments spans residues 3–23 (FLFD…FGIY), 49–69 (PMQW…ILLH), 76–96 (WKPT…VIGW), 121–141 (VAWA…AYQF), and 149–169 (FKLF…SIWL).

The protein belongs to the YciB family.

The protein resides in the cell inner membrane. Its function is as follows. Plays a role in cell envelope biogenesis, maintenance of cell envelope integrity and membrane homeostasis. The polypeptide is Inner membrane-spanning protein YciB (Cupriavidus metallidurans (strain ATCC 43123 / DSM 2839 / NBRC 102507 / CH34) (Ralstonia metallidurans)).